A 259-amino-acid polypeptide reads, in one-letter code: Ubiquitin-conjugating enzyme E2 J2 (259 aa).

At 1 to 226 the chain is on the cytoplasmic side; sequence MSSNSVKRAP…AGLQQANRHH (226 aa). A UBC core domain is found at 12–162; the sequence is TATQRLKQDY…DKVFCELFPE (151 aa). Cys94 serves as the catalytic Glycyl thioester intermediate. The segment at 174–200 is disordered; that stretch reads QDELSSRPQALPLPDVVPDGETHHGQH. The helical; Anchor for type IV membrane protein transmembrane segment at 227–247 threads the bilayer; it reads GLLGGALANLFVIVGFAAFAY. Residues 248–259 lie on the Lumenal side of the membrane; sequence TVKYVLRSIAQE.

Belongs to the ubiquitin-conjugating enzyme family.

It localises to the endoplasmic reticulum membrane. It carries out the reaction S-ubiquitinyl-[E1 ubiquitin-activating enzyme]-L-cysteine + [E2 ubiquitin-conjugating enzyme]-L-cysteine = [E1 ubiquitin-activating enzyme]-L-cysteine + S-ubiquitinyl-[E2 ubiquitin-conjugating enzyme]-L-cysteine.. Its pathway is protein modification; protein ubiquitination. Functionally, catalyzes the covalent attachment of ubiquitin to other proteins. Seems to function in the selective degradation of misfolded membrane proteins from the endoplasmic reticulum (ERAD). In cooperation with the GATOR2 complex, catalyzes 'Lys-6'-linked ubiquitination of NPRL2. This Bos taurus (Bovine) protein is Ubiquitin-conjugating enzyme E2 J2 (UBE2J2).